A 143-amino-acid chain; its full sequence is Large ribosomal subunit protein bL17 (143 aa).

The segment covering 124–133 has biased composition (basic and acidic residues); the sequence is GAGDRARLEA. The disordered stretch occupies residues 124 to 143; it reads GAGDRARLEAEGTDAEAAAA.

The protein belongs to the bacterial ribosomal protein bL17 family. In terms of assembly, part of the 50S ribosomal subunit. Contacts protein L32.

This Mesorhizobium japonicum (strain LMG 29417 / CECT 9101 / MAFF 303099) (Mesorhizobium loti (strain MAFF 303099)) protein is Large ribosomal subunit protein bL17.